The following is a 122-amino-acid chain: SLLQFNKMIKFETRKNAIPFYAFYGCYCGWGGQGRPKDATDRCCIVHDCCYGKLAKCNTKWDFYRYSLRSGYFQCGKGTWCEQQICECDRVAAECLRRSLSTYRYGYMIYPDSRCREPSETC.

Cystine bridges form between Cys26-Cys115, Cys28-Cys44, Cys43-Cys95, Cys49-Cys122, Cys50-Cys88, Cys57-Cys81, and Cys75-Cys86. The Ca(2+) site is built by Tyr27, Gly29, and Gly31. The active site involves His47. Asp48 serves as a coordination point for Ca(2+). Asp89 is an active-site residue.

The cofactor is Ca(2+). In terms of tissue distribution, expressed by the venom gland.

Its subcellular location is the secreted. The catalysed reaction is a 1,2-diacyl-sn-glycero-3-phosphocholine + H2O = a 1-acyl-sn-glycero-3-phosphocholine + a fatty acid + H(+). Functionally, snake venom phospholipase A2 (PLA2) that induces myonecrosis and edema upon intramuscular injections in mice. In vitro, causes a potent blockade of neuromuscular transmission in young chicken biventer cervicis preparation and produces cytotoxicity in murine C2C12 skeletal muscle myotubes and lack cytolytic activity upon myoblasts in vitro. PLA2 catalyzes the calcium-dependent hydrolysis of the 2-acyl groups in 3-sn-phosphoglycerides. The protein is Basic phospholipase A2 Cdr-12 of Crotalus durissus ruruima (South American rattlesnake).